The primary structure comprises 2381 residues: Nipped-B-like protein A (2381 aa).

The HEAT 1 repeat unit spans residues 85–124 (SDELEGDVPVLLQLLMSRNPNIFRNKTAPNTPQYPAQAGI). 3 disordered regions span residues 131–211 (PPYK…HLQQ), 240–289 (HLLQ…DIVG), and 329–503 (LAAI…ELPP). Residues 138 to 158 (GSMQGSPASANYQQASMSHSP) show a composition bias toward polar residues. Composition is skewed to basic and acidic residues over residues 254-273 (GTKDLHLGSQDKQRGQKSSE) and 333-355 (ERMESEAAMETERSAKEVQDKDK). Gly residues predominate over residues 373–389 (GTAGSGSGAPGGGGGAN). Over residues 451–473 (VKHEHDHDPEHPHYDDKQPDTPR) the composition is skewed to basic and acidic residues. The PxVxL motif motif lies at 552–565 (KKSVKPVVVLQKLS). Residues 570–580 (QRLMRERDSRA) are compositionally biased toward basic and acidic residues. Disordered stretches follow at residues 570–604 (QRLMRERDSRASKSGKNRLSSGRSGKGGIDPSVLK) and 629–708 (RKRS…NEVA). A compositionally biased stretch (polar residues) spans 581–592 (SKSGKNRLSSGR). 2 stretches are compositionally biased toward basic and acidic residues: residues 633–642 (TVNERPKYAE) and 658–694 (KDRDRTWEAEERDRRSSGEHRRGNFDARRGSGSRYDD). HEAT repeat units lie at residues 1299 to 1337 (SQSFDIYLTQILRVLGESAIAVRTKAMKCLSEVVAVDPS), 1375 to 1413 (PQLTEQYYDMLIERILDTGISVRKRVIKILRDICLEQPN), 1477 to 1516 (YDWFEQLLQNLLKSEEDSSYKPTRKACVQLVDNLVEHILK), and 1843 to 1881 (LIHPVQCVPYLIAMGTDAEPTMRNKADQQLVEIDKKYTG). Disordered stretches follow at residues 2005–2095 (IPGR…DLDD) and 2228–2271 (LLGG…GDSA). The span at 2006-2021 (PGRKSRKRRRRRRRPQ) shows a compositional bias: basic residues. A compositionally biased stretch (basic and acidic residues) spans 2040-2056 (EEERGAQDEERERHSGD). Residues 2057–2068 (EEYDDDDYEEDE) show a composition bias toward acidic residues. The segment covering 2077 to 2086 (KPTEDIRQSE) has biased composition (basic and acidic residues).

The protein belongs to the SCC2/Nipped-B family.

Its subcellular location is the nucleus. May play a structural role in chromatin. Involved in sister chromatid cohesion, possibly by facilitating the cohesin complex loading. Transcription factor, which may promote cortical neuron migration during brain development by regulating the transcription of crucial genes in this process. This Danio rerio (Zebrafish) protein is Nipped-B-like protein A (nipbla).